Consider the following 249-residue polypeptide: DNA repair protein RecO (249 aa).

Belongs to the RecO family.

Its function is as follows. Involved in DNA repair and RecF pathway recombination. The sequence is that of DNA repair protein RecO from Mycoplasma capricolum subsp. capricolum (strain California kid / ATCC 27343 / NCTC 10154).